Consider the following 60-residue polypeptide: Large ribosomal subunit protein uL30 (60 aa).

This sequence belongs to the universal ribosomal protein uL30 family. In terms of assembly, part of the 50S ribosomal subunit.

The chain is Large ribosomal subunit protein uL30 from Flavobacterium psychrophilum (strain ATCC 49511 / DSM 21280 / CIP 103535 / JIP02/86).